Reading from the N-terminus, the 597-residue chain is Medium/long-chain-fatty-acid--CoA ligase FadD6 (597 aa).

It belongs to the ATP-dependent AMP-binding enzyme family.

The enzyme catalyses a medium-chain fatty acid + ATP + CoA = a medium-chain fatty acyl-CoA + AMP + diphosphate. It catalyses the reaction a long-chain fatty acid + ATP + CoA = a long-chain fatty acyl-CoA + AMP + diphosphate. The catalysed reaction is hexanoate + ATP + CoA = hexanoyl-CoA + AMP + diphosphate. It carries out the reaction octanoate + ATP + CoA = octanoyl-CoA + AMP + diphosphate. The enzyme catalyses decanoate + ATP + CoA = decanoyl-CoA + AMP + diphosphate. It catalyses the reaction dodecanoate + ATP + CoA = dodecanoyl-CoA + AMP + diphosphate. The catalysed reaction is tetradecanoate + ATP + CoA = tetradecanoyl-CoA + AMP + diphosphate. It carries out the reaction hexadecanoate + ATP + CoA = hexadecanoyl-CoA + AMP + diphosphate. The enzyme catalyses octadecanoate + ATP + CoA = octadecanoyl-CoA + AMP + diphosphate. It catalyses the reaction 9-decenoate + ATP + CoA = 9-decenoyl-CoA + AMP + diphosphate. The catalysed reaction is (9Z)-octadecenoate + ATP + CoA = (9Z)-octadecenoyl-CoA + AMP + diphosphate. It carries out the reaction 2-hydroxyhexadecanoate + ATP + CoA = 2-hydroxyhexadecanoyl-CoA + AMP + diphosphate. The enzyme catalyses 3-hydroxytetradecanoate + ATP + CoA = 3-hydroxytetradecanoyl-CoA + AMP + diphosphate. It catalyses the reaction 12-hydroxyoctadecanoate + ATP + CoA = 12-hydroxyoctadecanoyl-CoA + AMP + diphosphate. The catalysed reaction is 15-hydroxypentadecanoate + ATP + CoA = 15-hydroxypentadecanoyl-CoA + AMP + diphosphate. It carries out the reaction 16-hydroxyhexadecanoate + ATP + CoA = 16-hydroxyhexadecanoyl-CoA + AMP + diphosphate. The enzyme catalyses 2-methylhexadecanoate + ATP + CoA = 2-methylhexadecanoyl-CoA + AMP + diphosphate. It catalyses the reaction 3-methylundecanoate + ATP + CoA = 3-methylundecanoyl-CoA + AMP + diphosphate. The catalysed reaction is 12-methyltridecanoate + ATP + CoA = 12-methyltridecanoyl-CoA + AMP + diphosphate. It carries out the reaction 12-methyloctadecanoate + ATP + CoA = 12-methyloctadecanoyl-CoA + AMP + diphosphate. In terms of biological role, catalyzes the activation of medium/long-chain fatty acids as acyl-coenzyme A (acyl-CoA). May play a role in the uptake of fatty acids by trapping them metabolically as CoA esters. May also play an important role in the channeling of fatty acids into triacylglycerol (TAG) for use by Mycobacterium during its dormancy. This is Medium/long-chain-fatty-acid--CoA ligase FadD6 from Mycobacterium tuberculosis (strain ATCC 25618 / H37Rv).